The sequence spans 499 residues: Glycerol kinase (499 aa).

An ADP-binding site is contributed by T13. T13, T14, and S15 together coordinate ATP. T13 is a binding site for sn-glycerol 3-phosphate. Residue R17 participates in ADP binding. Sn-glycerol 3-phosphate contacts are provided by R83, E84, Y135, and D245. The glycerol site is built by R83, E84, Y135, D245, and Q246. T267 and G310 together coordinate ADP. Residues T267, G310, Q314, and G411 each coordinate ATP. The ADP site is built by G411 and N415.

This sequence belongs to the FGGY kinase family.

It carries out the reaction glycerol + ATP = sn-glycerol 3-phosphate + ADP + H(+). Its pathway is polyol metabolism; glycerol degradation via glycerol kinase pathway; sn-glycerol 3-phosphate from glycerol: step 1/1. Inhibited by fructose 1,6-bisphosphate (FBP). Key enzyme in the regulation of glycerol uptake and metabolism. Catalyzes the phosphorylation of glycerol to yield sn-glycerol 3-phosphate. The sequence is that of Glycerol kinase from Xanthomonas campestris pv. campestris (strain 8004).